We begin with the raw amino-acid sequence, 597 residues long: Probable translation initiation factor IF-2 (597 aa).

The region spanning 4–221 (IRQPIIAVLG…LISGLAQKYL (218 aa)) is the tr-type G domain. A G1 region spans residues 13–20 (GHVDHGKT). Position 13 to 20 (13 to 20 (GHVDHGKT)) interacts with GTP. Residues 38-42 (GITQH) are G2. The interval 77-80 (DTPG) is G3. GTP-binding positions include 77-81 (DTPGH) and 131-134 (NKID). The segment at 131 to 134 (NKID) is G4. The segment at 199–201 (SAK) is G5.

Belongs to the TRAFAC class translation factor GTPase superfamily. Classic translation factor GTPase family. IF-2 subfamily.

Its function is as follows. Function in general translation initiation by promoting the binding of the formylmethionine-tRNA to ribosomes. Seems to function along with eIF-2. In Thermococcus sibiricus (strain DSM 12597 / MM 739), this protein is Probable translation initiation factor IF-2.